The following is a 124-amino-acid chain: Fluoride-specific ion channel FluC 2 (124 aa).

The next 4 membrane-spanning stretches (helical) occupy residues 9–29 (LGIF…STWL), 34–54 (DFPW…IYLV), 67–87 (LILA…SLML), and 99–119 (LSLI…AYYL). The Na(+) site is built by Gly77 and Thr80.

Belongs to the fluoride channel Fluc/FEX (TC 1.A.43) family.

It localises to the cell membrane. It catalyses the reaction fluoride(in) = fluoride(out). Na(+) is not transported, but it plays an essential structural role and its presence is essential for fluoride channel function. Its function is as follows. Fluoride-specific ion channel. Important for reducing fluoride concentration in the cell, thus reducing its toxicity. This is Fluoride-specific ion channel FluC 2 from Streptococcus pneumoniae serotype 4 (strain ATCC BAA-334 / TIGR4).